We begin with the raw amino-acid sequence, 184 residues long: Photosystem I assembly protein Ycf4 (184 aa).

The next 2 helical transmembrane spans lie at I19–G39 and I57–S77.

Belongs to the Ycf4 family.

The protein localises to the plastid. It localises to the chloroplast thylakoid membrane. In terms of biological role, seems to be required for the assembly of the photosystem I complex. The polypeptide is Photosystem I assembly protein Ycf4 (Atropa belladonna (Belladonna)).